A 742-amino-acid polypeptide reads, in one-letter code: Ectonucleotide pyrophosphatase/phosphodiesterase 1 (742 aa).

Over 1 to 113 (MELQNDLESL…TGFHSKVPFK (113 aa)) the chain is Cytoplasmic. Residues 114-134 (IIFRTLFGSLVFAIFLILMIN) form a helical membrane-spanning segment. Residues 135–742 (IAKPHHSTRV…SIDDLVDSDT (608 aa)) are Extracellular-facing. N-linked (GlcNAc...) asparagine glycosylation is found at asparagine 161 and asparagine 204. The phosphodiesterase stretch occupies residues 168–545 (PLTIVISLDG…VFTIGSHGYD (378 aa)). Threonine 219 serves as the catalytic Nucleophile. N-linked (GlcNAc...) asparagine glycosylation is found at asparagine 264, asparagine 296, and asparagine 403. The span at 640–659 (EETEQDNVDNDNDDNDDGNT) shows a compositional bias: acidic residues. 2 disordered regions span residues 640–670 (EETE…SSSL) and 686–711 (TLLG…TAST). Over residues 691–711 (TSPSSRSSSSSSIQASATAST) the composition is skewed to low complexity.

It belongs to the nucleotide pyrophosphatase/phosphodiesterase family. In terms of processing, autophosphorylated as part of the catalytic cycle of phosphodiesterase/pyrophosphatase activity. N-glycosylated.

It localises to the membrane. The catalysed reaction is Hydrolytically removes 5'-nucleotides successively from the 3'-hydroxy termini of 3'-hydroxy-terminated oligonucleotides.. The enzyme catalyses a ribonucleoside 5'-triphosphate + H2O = a ribonucleoside 5'-phosphate + diphosphate + H(+). It carries out the reaction a 2'-deoxyribonucleoside 5'-triphosphate + H2O = a 2'-deoxyribonucleoside 5'-phosphate + diphosphate + H(+). Functionally, mediates extracellular nucleotide derived phosphate hydrolysis along with NPP2 and PHO5. The chain is Ectonucleotide pyrophosphatase/phosphodiesterase 1 (NPP1) from Saccharomyces cerevisiae (strain ATCC 204508 / S288c) (Baker's yeast).